The sequence spans 412 residues: FAD-dependent monooxygenase nscC (412 aa).

Residues 1–21 (MGKPQETILIIGAGIAGLTAS) form the signal peptide. FAD is bound by residues glutamate 35 and alanine 46. Asparagine 68 and asparagine 92 each carry an N-linked (GlcNAc...) asparagine glycan. Arginine 119 is a binding site for FAD. 3 N-linked (GlcNAc...) asparagine glycosylation sites follow: asparagine 170, asparagine 231, and asparagine 251. Residues aspartate 326 and glycine 339 each contribute to the FAD site.

It belongs to the paxM FAD-dependent monooxygenase family. The cofactor is FAD.

Its pathway is secondary metabolite biosynthesis. Its function is as follows. FAD-dependent monooxygenase; part of the gene cluster that mediates the biosynthesis of neosartoricin B, a prenylated anthracenone that probably exhibits T-cell antiproliferative activity, suggestive of a physiological role as an immunosuppressive agent. The non-reducing polyketide synthase nscA probably synthesizes and cyclizes the decaketide backbone. The hydrolase nscB then mediates the product release through hydrolysis followed by spontaneous decarboxylation. The prenyltransferase nscD catalyzes the addition of the dimethylallyl group to the aromatic C5. The FAD-dependent monooxygenase nscC is then responsible for the stereospecific hydroxylation at C2. Neosartoricin B can be converted into two additional compounds neosartoricins C and D. Neosartoricin C is a spirocyclic compound that is cyclized through the attack of C3 hydroxyl on C14, followed by dehydration. On the other hand, neosartoricin D is a further cyclized compound in which attack of C2 on C14 in neosartoricin C results in the formation of the acetal-containing dioxabicyclo-octanone ring. Both of these compounds are novel and possibly represent related metabolites of the gene cluster. This is FAD-dependent monooxygenase nscC from Trichophyton rubrum (strain ATCC MYA-4607 / CBS 118892) (Athlete's foot fungus).